The sequence spans 282 residues: Pantothenate synthetase (282 aa).

30-37 (MGNLHEGH) contributes to the ATP binding site. His37 functions as the Proton donor in the catalytic mechanism. Gln61 is a (R)-pantoate binding site. Residue Gln61 coordinates beta-alanine. 149–152 (GEKD) is a binding site for ATP. Gln155 contributes to the (R)-pantoate binding site. Residues Val178 and 186–189 (KSSR) each bind ATP.

Belongs to the pantothenate synthetase family. As to quaternary structure, homodimer.

The protein localises to the cytoplasm. It carries out the reaction (R)-pantoate + beta-alanine + ATP = (R)-pantothenate + AMP + diphosphate + H(+). It participates in cofactor biosynthesis; (R)-pantothenate biosynthesis; (R)-pantothenate from (R)-pantoate and beta-alanine: step 1/1. Catalyzes the condensation of pantoate with beta-alanine in an ATP-dependent reaction via a pantoyl-adenylate intermediate. The sequence is that of Pantothenate synthetase from Marinobacter nauticus (strain ATCC 700491 / DSM 11845 / VT8) (Marinobacter aquaeolei).